We begin with the raw amino-acid sequence, 346 residues long: MVSEAPPFWWTKADWRAYALWPFSWVYGRIAGMRMDRARRATSAVPLICIGNFTVGGAGKTPTAIAIARAARARGLKPAFLSRGYGGSLDVTTVVDPEHHRARDVGDEPLLLAREALTVICRRRVDGARKLAAEGADIIIMDDGFQSARLVFDFALLVVDSGRGIGNGHLVPSGPVRAPIGNQLRHANALLKLGHGSAADPLVRRAARAGKPVYVAETVRTDAGSLDGVKVLAWAGIADPEKFFKTVRETGAVIEETRSFPDHHHFSEDEIADLIDRAASRGYTLVTTAKDMVRLEPGHGRAGELAAKSRVIEIEVRFDDPAAPGKIIDAALASARARRLRERKAG.

54–61 serves as a coordination point for ATP; sequence TVGGAGKT.

It belongs to the LpxK family.

The enzyme catalyses a lipid A disaccharide + ATP = a lipid IVA + ADP + H(+). The protein operates within glycolipid biosynthesis; lipid IV(A) biosynthesis; lipid IV(A) from (3R)-3-hydroxytetradecanoyl-[acyl-carrier-protein] and UDP-N-acetyl-alpha-D-glucosamine: step 6/6. Its function is as follows. Transfers the gamma-phosphate of ATP to the 4'-position of a tetraacyldisaccharide 1-phosphate intermediate (termed DS-1-P) to form tetraacyldisaccharide 1,4'-bis-phosphate (lipid IVA). This is Tetraacyldisaccharide 4'-kinase from Rhizobium meliloti (strain 1021) (Ensifer meliloti).